We begin with the raw amino-acid sequence, 649 residues long: DNA mismatch repair protein MutL (649 aa).

Belongs to the DNA mismatch repair MutL/HexB family.

This protein is involved in the repair of mismatches in DNA. It is required for dam-dependent methyl-directed DNA mismatch repair. May act as a 'molecular matchmaker', a protein that promotes the formation of a stable complex between two or more DNA-binding proteins in an ATP-dependent manner without itself being part of a final effector complex. The chain is DNA mismatch repair protein MutL from Streptococcus pneumoniae (strain P1031).